Here is a 1270-residue protein sequence, read N- to C-terminus: MGHSRRPAGGEKKSRGFGRSKAAADVGDGRQAGKPQVKKAVFESTKKKEIGVSDLTLLSKISNEAINDNLKLRFEHDEIYTYIGHVLVSVNPFRDLGIYTDRVLESYRGKNRLEVPPHVFAVAESAYYNMKSYKDNQCVIISGESGAGKTEAAKRIMQYIASVSGGSDSSIQQTKDMVLATNPLLESFGNAKTLRNNNSSRFGKYLELEFNTNGEPVGANITNYLLEKSRVVGQITNERNFHIFYQFTKAAPQKYRDMFGIQQPQSYLYTSRSKCYDVPGVDDAAEFRDTINAMGVIGMTEAEQDEVFRMLAAILWIGNIQFAEDDSGNAAITDQSVVDFVAYLLEVDAAQVNKALTIRLMETARGGRRGSVYEVPLNTVQALAVRDALSKAIYFNLFDWIVGRVNSSLTARGSVANSIGILDIYGFEIFEKNSFEQLCINYVNEKLQQIFIQLTLKAEQDEYAREQIQWTPIKYFDNKVVCSLIEDKRPPGVFAALNDACATAHADSGAADNTFVGRLNFLGQNPNFESRQGQFIVKHYAGDVSYAVEGMTDKNKDQLLKDLLNLAGSSSNQFVHTLFPNQVNQDDKRRPPTASDKIKASANDLVATLMKAQPSYIRTIKPNDNKAPREYNQGNVLHQIKYLGLQENVRIRRAGFAYRQTFDKFVERFYLLSPKTSYAGDYTWTGDEESGARQILKDTSIPAEEYQMGITKVFVKTPETLFALETMRDRYWHNMAIRIQRAWRNYLRYRIECAIRIQRFWRRMTGGLEFIKLRDQGHQVLQGKKERRRMSLLGSRRFLGDYVGVGNKGGPGEMIHNGAGINGSENILFSCRGEVLISKFGRSSKPAPRIFVLLTTQTNRHVYIVAQTLVNNQLQIASERTIPIGAIKSVSTSNLKDDWFSLVVGGQEPDPLMNCVFKTEFFTHLTNALRGQLNLKIADHIEYNKKPGKLATVKVVKDPGASNVDSYKSSTIHTSAGEPPSSVSKPTPRPKQVAARPVTKGKLLRPGGPGGGPSKLASRPAPARQPMPQPTPQPAAVQPPPAPRPAVSPAAQPRPVPQPVAAVAAAQHTRNASSSSTRAPPPPPPATPPAAQRKPMAKVLYDFNSDQSNELSIRAGDLVQIVSKEGNGWWLCMNTTTSVQGWTPEAYLEEQVAASPKPAPPPPPPAAPRASPVPATNGAAAAVAAKAKAKPAPPAPPAKRPNMAGRKVAPAPPAAPRDSAVSMNSHDSSGGSGRGTPNSASNASLAGGLAEALKARQHAMQGHHDEDDEW.

The segment at 1 to 40 is disordered; sequence MGHSRRPAGGEKKSRGFGRSKAAADVGDGRQAGKPQVKKA. Residues 50 to 729 form the Myosin motor domain; that stretch reads IGVSDLTLLS…TLFALETMRD (680 aa). 143-150 provides a ligand contact to ATP; sequence GESGAGKT. Ser371 carries the phosphoserine modification. The actin-binding stretch occupies residues 418-500; the sequence is SIGILDIYGF…PGVFAALNDA (83 aa). IQ domains are found at residues 733–753 and 754–779; these read HNMA…RIEC and AIRI…QGHQ. The TH1 domain maps to 787-980; that stretch reads RRRMSLLGSR…TIHTSAGEPP (194 aa). 2 disordered regions span residues 960–1102 and 1144–1270; these read GASN…VLYD and PEAY…DDEW. Residues 963–974 show a composition bias toward polar residues; that stretch reads NVDSYKSSTIHT. Pro residues predominate over residues 1023 to 1058; that stretch reads ARQPMPQPTPQPAAVQPPPAPRPAVSPAAQPRPVPQ. Residues 1059 to 1078 are compositionally biased toward low complexity; that stretch reads PVAAVAAAQHTRNASSSSTR. A compositionally biased stretch (pro residues) spans 1079-1088; sequence APPPPPPATP. The SH3 domain maps to 1092–1153; it reads QRKPMAKVLY…PEAYLEEQVA (62 aa). Pro residues predominate over residues 1157-1167; sequence KPAPPPPPPAA. Low complexity-rich tracts occupy residues 1168 to 1186 and 1238 to 1252; these read PRAS…VAAK and NSAS…LAEA.

This sequence belongs to the TRAFAC class myosin-kinesin ATPase superfamily. Myosin family. Post-translationally, phosphorylation of the TEDS site (Ser-371) is required for the polarization of the actin cytoskeleton. Phosphorylation probably activates the myosin-I ATPase activity.

The protein resides in the cytoplasm. It is found in the cytoskeleton. Its subcellular location is the actin patch. Type-I myosin implicated in the organization of the actin cytoskeleton. Required for proper actin cytoskeleton polarization. At the cell cortex, assembles in patch-like structures together with proteins from the actin-polymerizing machinery and promotes actin assembly. Functions as actin nucleation-promoting factor (NPF) for the Arp2/3 complex. Plays an important role in polarized growth, spore germination, hyphal morphogenesis, and septal wall formation. The protein is Myosin-1 (myoA) of Aspergillus niger (strain ATCC MYA-4892 / CBS 513.88 / FGSC A1513).